A 468-amino-acid polypeptide reads, in one-letter code: Monocarboxylate transporter 6 (468 aa).

Residues 1 to 13 lie on the Cytoplasmic side of the membrane; that stretch reads MARALEQADGRWA. A helical transmembrane segment spans residues 14–34; it reads WVVLLSSLVTQALTLGFPTCI. The Extracellular portion of the chain corresponds to 35 to 53; that stretch reads GVFFTDLQRDFQASNSETS. Residues 54 to 74 form a helical membrane-spanning segment; that stretch reads WFPSILGAMVHGGGPLCSILV. The Cytoplasmic segment spans residues 75–80; sequence KHFGCR. The chain crosses the membrane as a helical span at residues 81–101; it reads VTMMLGGVLASLGMVVSTFSG. Position 102 (Ser102) is a topological domain, extracellular. Residues 103–122 traverse the membrane as a helical segment; the sequence is LTHLFLTAGVITGLGMCFSF. At 123–138 the chain is on the cytoplasmic side; the sequence is QSSITVVGLYFVRRRP. Residues 139–159 traverse the membrane as a helical segment; that stretch reads LANALASMGLSMGVTLWPLLA. The Extracellular portion of the chain corresponds to 160-171; the sequence is RYLLETLGWRGA. Residues 172–192 form a helical membrane-spanning segment; the sequence is FLIFGGILLHCCVCGALLRPV. Topologically, residues 193 to 239 are cytoplasmic; the sequence is ATNEVPEPKEDPLLPPKIPTRSCLATCVSTIRYHLAFDILRHNMGFC. The helical transmembrane segment at 240 to 260 threads the bilayer; that stretch reads IYVTGVTWMNLGFALPHIFLV. Residues 261–274 lie on the Extracellular side of the membrane; it reads PYAMHHGVDDYWAA. Residues 275 to 295 traverse the membrane as a helical segment; it reads MLMSIVGFCNIFLRPMAGLLL. Over 296-306 the chain is Cytoplasmic; that stretch reads AGRKSLAAYRK. The chain crosses the membrane as a helical span at residues 307-327; that stretch reads YLFAVAILINGLTNLICTVSA. The Extracellular portion of the chain corresponds to 328-330; the sequence is DFR. Residues 331–351 traverse the membrane as a helical segment; it reads VLLGYCLVYSLSMCGVGILVF. The Cytoplasmic portion of the chain corresponds to 352–368; that stretch reads QVLMDIVPMDRFPSALG. The helical transmembrane segment at 369 to 389 threads the bilayer; the sequence is LFTILCGVTSLISPPLAGLLL. Residues 390–396 are Extracellular-facing; sequence DKTNNFS. A helical transmembrane segment spans residues 397–417; that stretch reads YVFYMSSGFLVSGSLILGVGF. At 418–468 the chain is on the cytoplasmic side; the sequence is YAAEKKKLKQDGQAKMENATSEMTPMHDLTSEDKDSAKKQPYPESIYMTNV. Residues 429-468 are disordered; that stretch reads GQAKMENATSEMTPMHDLTSEDKDSAKKQPYPESIYMTNV. The span at 446–455 shows a compositional bias: basic and acidic residues; that stretch reads LTSEDKDSAK.

The protein belongs to the major facilitator superfamily. Monocarboxylate porter (TC 2.A.1.13) family.

The protein resides in the cell membrane. Functionally, proton-linked monocarboxylate transporter. Catalyzes the rapid transport across the plasma membrane of many monocarboxylates such as lactate, pyruvate, branched-chain oxo acids derived from leucine, valine and isoleucine, and the ketone bodies acetoacetate, beta-hydroxybutyrate and acetate. The sequence is that of Monocarboxylate transporter 6 (Slc16a5) from Mus musculus (Mouse).